The following is a 338-amino-acid chain: D-erythrose-4-phosphate dehydrogenase (338 aa).

R11 to I12 contributes to the NAD(+) binding site. Residues S153–T155, R199, T212–K213, and R235 each bind substrate. C154 functions as the Nucleophile in the catalytic mechanism. Residue N317 coordinates NAD(+).

Belongs to the glyceraldehyde-3-phosphate dehydrogenase family. Epd subfamily. In terms of assembly, homotetramer.

Its subcellular location is the cytoplasm. It carries out the reaction D-erythrose 4-phosphate + NAD(+) + H2O = 4-phospho-D-erythronate + NADH + 2 H(+). It participates in cofactor biosynthesis; pyridoxine 5'-phosphate biosynthesis; pyridoxine 5'-phosphate from D-erythrose 4-phosphate: step 1/5. Functionally, catalyzes the NAD-dependent conversion of D-erythrose 4-phosphate to 4-phosphoerythronate. The polypeptide is D-erythrose-4-phosphate dehydrogenase (Shewanella amazonensis (strain ATCC BAA-1098 / SB2B)).